We begin with the raw amino-acid sequence, 211 residues long: Large ribosomal subunit protein uL3 (211 aa).

The tract at residues 135–155 is disordered; it reads THGNSLSHRAPGSIGQNQSPG. Glutamine 152 carries the post-translational modification N5-methylglutamine.

Belongs to the universal ribosomal protein uL3 family. As to quaternary structure, part of the 50S ribosomal subunit. Forms a cluster with proteins L14 and L19. Methylated by PrmB.

Functionally, one of the primary rRNA binding proteins, it binds directly near the 3'-end of the 23S rRNA, where it nucleates assembly of the 50S subunit. This chain is Large ribosomal subunit protein uL3, found in Pseudoalteromonas translucida (strain TAC 125).